Consider the following 553-residue polypeptide: Zinc finger protein Elbow (553 aa).

Disordered regions lie at residues 59-243 (STKQ…MHSP) and 388-407 (GGGGGGSSKSSGSQGGSGGS). 2 stretches are compositionally biased toward low complexity: residues 96-110 (SPVSSHSSSVSTGSV) and 121-134 (SSSSSKPTPTTFKP). 3 stretches are compositionally biased toward polar residues: residues 137–146 (PNNNISNITT), 153–173 (TNLSSNNTSAQQRVKTPKSMT), and 224–236 (TASTTPGRSNSKE). A self-association region spans residues 287–480 (SASAAAAAAS…PDAVLSAAAA (194 aa)). The interaction with noc stretch occupies residues 287-553 (SASAAAAAAS…YGPRMGSSHP (267 aa)). Gly residues predominate over residues 388–406 (GGGGGGSSKSSGSQGGSGG). The C2H2-type zinc-finger motif lies at 437 to 466 (YVCSWIGSDAAYCGKRFGTSDDLFQHLRTH).

It belongs to the Elbow/Noc family. In terms of assembly, self-associates. Interacts with gro and noc.

May negatively regulate Notch-induced cell proliferation in the eye-head primordium. May act in leg and wing primordia to negatively regulate body-wall specifying genes and thereby promote appendage formation. Required for tracheal development. The chain is Zinc finger protein Elbow (elB) from Drosophila melanogaster (Fruit fly).